The sequence spans 374 residues: Flavonoid O-methyltransferase-like protein Os11g0303600 (374 aa).

S-adenosyl-L-homocysteine is bound by residues D242, D262, M263, and K276. H280 serves as the catalytic Proton acceptor.

This sequence belongs to the class I-like SAM-binding methyltransferase superfamily. Cation-independent O-methyltransferase family. COMT subfamily.

The chain is Flavonoid O-methyltransferase-like protein Os11g0303600 from Oryza sativa subsp. japonica (Rice).